The sequence spans 427 residues: MAEQDVENDLLDYDEEEEPQAPQESTPAPPKKDIKGSYVSIHSSGFRDFLLKPELLRAIVDCGFEHPSEVQHECIPQAILGMDVLCQAKSGMGKTAVFVLATLQQIEPVNGQVTVLVMCHTRELAFQISKEYERFSKYMPSVKVSVFFGGLSIKKDEEVLKKNCPHVVVGTPGRILALVRNRSFSLKNVKHFVLDECDKMLEQLDMRRDVQEIFRLTPHEKQCMMFSATLSKDIRPVCRKFMQDPMEVFVDDETKLTLHGLQQYYVKLKDSEKNRKLFDLLDVLEFNQVIIFVKSVQRCMALAQLLVEQNFPAIAIHRGMAQEERLSRYQQFKDFQRRILVATNLFGRGMDIERVNIVFNYDMPEDSDTYLHRVARAGRFGTKGLAITFVSDENDAKILNDVQDRFEVNVAELPEEIDISTYIEQSR.

Residues 1–19 show a composition bias toward acidic residues; the sequence is MAEQDVENDLLDYDEEEEP. A disordered region spans residues 1-34; that stretch reads MAEQDVENDLLDYDEEEEPQAPQESTPAPPKKDI. Ala-2 carries the post-translational modification N-acetylalanine. Lys-31 participates in a covalent cross-link: Glycyl lysine isopeptide (Lys-Gly) (interchain with G-Cter in SUMO2). At Lys-35 the chain carries N6-acetyllysine; alternate. Lys-35 participates in a covalent cross-link: Glycyl lysine isopeptide (Lys-Gly) (interchain with G-Cter in SUMO2); alternate. At Ser-37 the chain carries Phosphoserine. The Q motif signature appears at 44-72; sequence SGFRDFLLKPELLRAIVDCGFEHPSEVQH. The Helicase ATP-binding domain occupies 75–248; the sequence is IPQAILGMDV…RKFMQDPMEV (174 aa). 88 to 95 is an ATP binding site; it reads AKSGMGKT. Glycyl lysine isopeptide (Lys-Gly) (interchain with G-Cter in SUMO2) cross-links involve residues Lys-154 and Lys-162. The residue at position 171 (Thr-171) is a Phosphothreonine. The DECD box motif lies at 195 to 198; that stretch reads DECD. Glycyl lysine isopeptide (Lys-Gly) (interchain with G-Cter in SUMO2) cross-links involve residues Lys-240 and Lys-255. The region spanning 260–421 is the Helicase C-terminal domain; sequence GLQQYYVKLK…ELPEEIDIST (162 aa). Ser-426 is subject to Phosphoserine.

The protein belongs to the DEAD box helicase family. DECD subfamily. In terms of assembly, binds ALYREF/THOC4 and DDX39B/BAT1. Interacts with the apo-AREX complex component SARNP. Interacts with MX1. Interacts with MCM3AP isoform GANP. Interacts with ECD. Interacts with PHAX; this interaction stimulates PHAX RNA binding activity. (Microbial infection) Interacts with human cytomegalovirus/HHV-5 protein UL69. In terms of processing, SUMOylated by RANBP2; SUMOylation modification affects its ability to bind RNA. As to expression, detected in testis, and at lower levels in brain, kidney, lung, thymus, spleen and salivary gland.

It localises to the nucleus. Its subcellular location is the cytoplasm. It catalyses the reaction ATP + H2O = ADP + phosphate + H(+). In terms of biological role, helicase that plays an essential role in mRNA export and is involved in multiple steps in RNA metabolism including alternative splicing. Regulates nuclear mRNA export to the cytoplasm through association with ECD. Also involved in spliceosomal uridine-rich small nuclear RNA (U snRNA) export by stimulating the RNA binding of adapter PHAX. Plays a role in the negative regulation of type I IFN production by increasing the nuclear retention of antiviral transcripts and thus reducing their protein expression. Independently of the interferon pathway, plays an antiviral role against alphaviruses by binding to a 5' conserved sequence element in the viral genomic RNA. The chain is ATP-dependent RNA helicase DDX39A (DDX39A) from Homo sapiens (Human).